The following is a 461-amino-acid chain: Cysteine--tRNA ligase (461 aa).

Residue Cys-28 participates in Zn(2+) binding. Positions 30–40 (ITVYDLCHIGH) match the 'HIGH' region motif. Residues Cys-209, His-234, and Glu-238 each contribute to the Zn(2+) site. Positions 266-270 (KMSKS) match the 'KMSKS' region motif. Lys-269 is a binding site for ATP.

Belongs to the class-I aminoacyl-tRNA synthetase family. As to quaternary structure, monomer. The cofactor is Zn(2+).

Its subcellular location is the cytoplasm. The enzyme catalyses tRNA(Cys) + L-cysteine + ATP = L-cysteinyl-tRNA(Cys) + AMP + diphosphate. This Pectobacterium carotovorum subsp. carotovorum (strain PC1) protein is Cysteine--tRNA ligase.